Consider the following 351-residue polypeptide: Glucan endo-1,3-beta-glucosidase (351 aa).

An N-terminal signal peptide occupies residues 1–32; sequence MALWYLFNKRSLGAAVLILVGLLMCNIQITGA. Gln33 is modified (pyrrolidone carboxylic acid). Residues Asn79 and Asn99 are each glycosylated (N-linked (GlcNAc...) asparagine). Catalysis depends on Glu128, which acts as the Proton donor. Asn235 is a glycosylation site (N-linked (GlcNAc...) asparagine). Catalysis depends on Glu268, which acts as the Nucleophile.

This sequence belongs to the glycosyl hydrolase 17 family. In terms of processing, glycosylated. Post-translationally, the N-terminus is blocked.

It localises to the secreted. The protein localises to the extracellular space. It is found in the extracellular matrix. The catalysed reaction is Hydrolysis of (1-&gt;3)-beta-D-glucosidic linkages in (1-&gt;3)-beta-D-glucans.. Functionally, implicated in the defense of plants against pathogens. This Nicotiana tabacum (Common tobacco) protein is Glucan endo-1,3-beta-glucosidase (SP41B).